A 156-amino-acid chain; its full sequence is MSEQNNTEMAFQIQRIYTKDISFEAPNAPQVFQQDWQPEVKLDLDTASSQLAEDVYEVVLRVTVTASLGEETAFLCEVQQGGIFSIAGIDGTQLAHCLGAYCPNILFPYARECITSLVSRGTFPQLNLAPVNFDALFMNYLQQQAEGEGAEQRQDA.

It belongs to the SecB family. In terms of assembly, homotetramer, a dimer of dimers. One homotetramer interacts with 1 SecA dimer.

It localises to the cytoplasm. One of the proteins required for the normal export of preproteins out of the cell cytoplasm. It is a molecular chaperone that binds to a subset of precursor proteins, maintaining them in a translocation-competent state. It also specifically binds to its receptor SecA. This chain is Protein-export protein SecB, found in Yersinia enterocolitica serotype O:8 / biotype 1B (strain NCTC 13174 / 8081).